A 32-amino-acid chain; its full sequence is Trypsin inhibitor 2b (32 aa).

Disulfide bonds link cysteine 3–cysteine 20, cysteine 10–cysteine 22, and cysteine 16–cysteine 29.

Belongs to the protease inhibitor I7 (squash-type serine protease inhibitor) family.

It localises to the secreted. In terms of biological role, inhibits trypsin. This is Trypsin inhibitor 2b from Cucumis sativus (Cucumber).